Reading from the N-terminus, the 107-residue chain is Iron-binding protein IscA (107 aa).

Fe cation contacts are provided by C35, C99, and C101.

This sequence belongs to the HesB/IscA family. Homodimer; may form tetramers and higher multimers. Fe cation is required as a cofactor.

Its function is as follows. Is able to transfer iron-sulfur clusters to apo-ferredoxin. Multiple cycles of [2Fe2S] cluster formation and transfer are observed, suggesting that IscA acts catalytically. Recruits intracellular free iron so as to provide iron for the assembly of transient iron-sulfur cluster in IscU in the presence of IscS, L-cysteine and the thioredoxin reductase system TrxA/TrxB. The sequence is that of Iron-binding protein IscA from Serratia proteamaculans (strain 568).